The sequence spans 187 residues: Lipoprotein signal peptidase (187 aa).

Transmembrane regions (helical) follow at residues 12-32, 68-88, and 91-111; these read VAVF…TKMW, MTWL…VLAV, and ISMK…GNLI. Catalysis depends on residues aspartate 127 and aspartate 140. A helical membrane pass occupies residues 141 to 161; sequence IFLMLAGVAAVLLLFLGEPFS. The interval 167 to 187 is disordered; it reads EANGKTLGDDANATDDGAKAA.

This sequence belongs to the peptidase A8 family.

It localises to the cell membrane. It carries out the reaction Release of signal peptides from bacterial membrane prolipoproteins. Hydrolyzes -Xaa-Yaa-Zaa-|-(S,diacylglyceryl)Cys-, in which Xaa is hydrophobic (preferably Leu), and Yaa (Ala or Ser) and Zaa (Gly or Ala) have small, neutral side chains.. The protein operates within protein modification; lipoprotein biosynthesis (signal peptide cleavage). In terms of biological role, this protein specifically catalyzes the removal of signal peptides from prolipoproteins. This is Lipoprotein signal peptidase from Bifidobacterium adolescentis (strain ATCC 15703 / DSM 20083 / NCTC 11814 / E194a).